The chain runs to 212 residues: Uridine kinase (212 aa).

13–20 (GGSGSGKT) lines the ATP pocket.

Belongs to the uridine kinase family.

The protein resides in the cytoplasm. It carries out the reaction uridine + ATP = UMP + ADP + H(+). The enzyme catalyses cytidine + ATP = CMP + ADP + H(+). It participates in pyrimidine metabolism; CTP biosynthesis via salvage pathway; CTP from cytidine: step 1/3. The protein operates within pyrimidine metabolism; UMP biosynthesis via salvage pathway; UMP from uridine: step 1/1. The sequence is that of Uridine kinase from Bacillus cytotoxicus (strain DSM 22905 / CIP 110041 / 391-98 / NVH 391-98).